We begin with the raw amino-acid sequence, 260 residues long: Snake venom serine protease homolog (260 aa).

The signal sequence occupies residues 1–18 (MVLVRVLANLLMLQLSYA). Positions 19–24 (QKSSEL) are excised as a propeptide. The Peptidase S1 domain maps to 25–251 (IIGGDECNIN…HLDWIKSIIA (227 aa)). Intrachain disulfides connect C31/C165, C52/C68, C100/C258, C144/C212, C176/C191, and C202/C227. The active-site Charge relay system is D112. N-linked (GlcNAc...) asparagine glycans are attached at residues N123 and N124. The active-site Charge relay system is S206.

Belongs to the peptidase S1 family. Snake venom subfamily. Expressed by the venom gland.

The protein resides in the secreted. Snake venom serine protease homolog. May act in the hemostasis system of the prey. The polypeptide is Snake venom serine protease homolog (Protobothrops jerdonii (Jerdon's pitviper)).